The following is a 66-amino-acid chain: Metallothionein (66 aa).

Position 1 is an N-acetylserine (serine 1). Cysteine 9, cysteine 13, cysteine 18, cysteine 20, cysteine 24, cysteine 26, cysteine 30, cysteine 32, cysteine 35, cysteine 38, cysteine 40, cysteine 45, cysteine 47, cysteine 51, cysteine 57, cysteine 59, cysteine 63, and cysteine 65 together coordinate Cd(2+).

The protein belongs to the metallothionein superfamily. Type 2 family.

Functionally, the metallothioneins are involved in the cellular sequestration of toxic metal ions and regulation of essential trace elements. This Arianta arbustorum (Land snail) protein is Metallothionein.